Reading from the N-terminus, the 338-residue chain is GTPase Obg (338 aa).

The region spanning 1–159 (MKFIDEVTLF…AKLRLELKLM (159 aa)) is the Obg domain. The 172-residue stretch at 160 to 331 (ADVGLLGLPN…LLDEIARRLW (172 aa)) folds into the OBG-type G domain. GTP contacts are provided by residues 166-173 (GLPNAGKS), 191-195 (FTTIK), 213-216 (DIPG), 283-286 (TKLD), and 312-314 (SSA). Residues S173 and T193 each coordinate Mg(2+).

The protein belongs to the TRAFAC class OBG-HflX-like GTPase superfamily. OBG GTPase family. Monomer. It depends on Mg(2+) as a cofactor.

The protein resides in the cytoplasm. Functionally, an essential GTPase which binds GTP, GDP and possibly (p)ppGpp with moderate affinity, with high nucleotide exchange rates and a fairly low GTP hydrolysis rate. Plays a role in control of the cell cycle, stress response, ribosome biogenesis and in those bacteria that undergo differentiation, in morphogenesis control. In Pelobacter propionicus (strain DSM 2379 / NBRC 103807 / OttBd1), this protein is GTPase Obg.